The following is a 331-amino-acid chain: Ornithine carbamoyltransferase (331 aa).

Residues 57–60 (STRT), glutamine 82, arginine 106, and 133–136 (HPTQ) contribute to the carbamoyl phosphate site. Residues asparagine 166, aspartate 230, and 234–235 (SM) each bind L-ornithine. Residues 272-273 (CL) and arginine 317 each bind carbamoyl phosphate.

It belongs to the aspartate/ornithine carbamoyltransferase superfamily. OTCase family.

The protein localises to the cytoplasm. The catalysed reaction is carbamoyl phosphate + L-ornithine = L-citrulline + phosphate + H(+). It participates in amino-acid degradation; L-arginine degradation via ADI pathway; carbamoyl phosphate from L-arginine: step 2/2. Reversibly catalyzes the transfer of the carbamoyl group from carbamoyl phosphate (CP) to the N(epsilon) atom of ornithine (ORN) to produce L-citrulline. The chain is Ornithine carbamoyltransferase from Clostridium perfringens (strain SM101 / Type A).